Here is a 638-residue protein sequence, read N- to C-terminus: Methionine--tRNA ligase (638 aa).

The 'HIGH' region motif lies at Tyr12–His22. 4 residues coordinate Zn(2+): Cys127, Cys130, Cys144, and Cys147. The short motif at Lys296–Ser300 is the 'KMSKS' region element. Position 299 (Lys299) interacts with ATP. The region spanning Asp538–Ser638 is the tRNA-binding domain.

This sequence belongs to the class-I aminoacyl-tRNA synthetase family. MetG type 2A subfamily. As to quaternary structure, homodimer. Zn(2+) serves as cofactor.

The protein localises to the cytoplasm. The catalysed reaction is tRNA(Met) + L-methionine + ATP = L-methionyl-tRNA(Met) + AMP + diphosphate. Functionally, is required not only for elongation of protein synthesis but also for the initiation of all mRNA translation through initiator tRNA(fMet) aminoacylation. This Caldanaerobacter subterraneus subsp. tengcongensis (strain DSM 15242 / JCM 11007 / NBRC 100824 / MB4) (Thermoanaerobacter tengcongensis) protein is Methionine--tRNA ligase (metG).